Consider the following 514-residue polypeptide: Maturase K (514 aa).

It belongs to the intron maturase 2 family. MatK subfamily.

It is found in the plastid. Its subcellular location is the chloroplast. Usually encoded in the trnK tRNA gene intron. Probably assists in splicing its own and other chloroplast group II introns. This is Maturase K from Phoenix dactylifera (Date palm).